A 328-amino-acid polypeptide reads, in one-letter code: GTPase Obg (328 aa).

The region spanning Met1 to Leu159 is the Obg domain. The region spanning Ser160–Lys327 is the OBG-type G domain. GTP contacts are provided by residues Gly166–Ser173, Phe191–Val195, Asp212–Gly215, Asn279–Asp282, and Ser308–Tyr310. 2 residues coordinate Mg(2+): Ser173 and Thr193.

It belongs to the TRAFAC class OBG-HflX-like GTPase superfamily. OBG GTPase family. In terms of assembly, monomer. The cofactor is Mg(2+).

Its subcellular location is the cytoplasm. An essential GTPase which binds GTP, GDP and possibly (p)ppGpp with moderate affinity, with high nucleotide exchange rates and a fairly low GTP hydrolysis rate. Plays a role in control of the cell cycle, stress response, ribosome biogenesis and in those bacteria that undergo differentiation, in morphogenesis control. In Rickettsia bellii (strain RML369-C), this protein is GTPase Obg.